The sequence spans 399 residues: Elongation factor Tu (399 aa).

Positions 10 to 204 (KPHVNIGTIG…AVDASIPEPE (195 aa)) constitute a tr-type G domain. The G1 stretch occupies residues 19-26 (GHVDHGKT). 19–26 (GHVDHGKT) contributes to the GTP binding site. Thr26 contributes to the Mg(2+) binding site. Residues 60–64 (GITIN) are G2. Residues 81-84 (DCPG) form a G3 region. GTP is bound by residues 81–85 (DCPGH) and 136–139 (NKCD). Positions 136–139 (NKCD) are G4. The tract at residues 174 to 176 (SGL) is G5.

The protein belongs to the TRAFAC class translation factor GTPase superfamily. Classic translation factor GTPase family. EF-Tu/EF-1A subfamily. Monomer.

It is found in the cytoplasm. It carries out the reaction GTP + H2O = GDP + phosphate + H(+). GTP hydrolase that promotes the GTP-dependent binding of aminoacyl-tRNA to the A-site of ribosomes during protein biosynthesis. The sequence is that of Elongation factor Tu from Prochlorococcus marinus (strain AS9601).